A 335-amino-acid chain; its full sequence is Nucleoid-associated protein KPN78578_25800 (335 aa).

This sequence belongs to the YejK family.

Its subcellular location is the cytoplasm. The protein resides in the nucleoid. In Klebsiella pneumoniae subsp. pneumoniae (strain ATCC 700721 / MGH 78578), this protein is Nucleoid-associated protein KPN78578_25800.